Here is a 237-residue protein sequence, read N- to C-terminus: DNA repair protein RecO (237 aa).

It belongs to the RecO family.

Involved in DNA repair and RecF pathway recombination. The sequence is that of DNA repair protein RecO from Rickettsia akari (strain Hartford).